A 279-amino-acid polypeptide reads, in one-letter code: Diaminopimelate epimerase (279 aa).

Substrate is bound by residues Asn-13 and Asn-66. Cys-75 functions as the Proton donor in the catalytic mechanism. Substrate-binding positions include 76-77, Asn-164, Asn-197, and 215-216; these read GN and ER. Cys-224 functions as the Proton acceptor in the catalytic mechanism. Position 225-226 (225-226) interacts with substrate; sequence GT.

It belongs to the diaminopimelate epimerase family. Homodimer.

Its subcellular location is the cytoplasm. The catalysed reaction is (2S,6S)-2,6-diaminopimelate = meso-2,6-diaminopimelate. It functions in the pathway amino-acid biosynthesis; L-lysine biosynthesis via DAP pathway; DL-2,6-diaminopimelate from LL-2,6-diaminopimelate: step 1/1. Its function is as follows. Catalyzes the stereoinversion of LL-2,6-diaminopimelate (L,L-DAP) to meso-diaminopimelate (meso-DAP), a precursor of L-lysine and an essential component of the bacterial peptidoglycan. This chain is Diaminopimelate epimerase, found in Nostoc punctiforme (strain ATCC 29133 / PCC 73102).